Reading from the N-terminus, the 313-residue chain is Methionyl-tRNA formyltransferase (313 aa).

110–113 is a (6S)-5,6,7,8-tetrahydrofolate binding site; that stretch reads SLLP.

It belongs to the Fmt family.

The enzyme catalyses L-methionyl-tRNA(fMet) + (6R)-10-formyltetrahydrofolate = N-formyl-L-methionyl-tRNA(fMet) + (6S)-5,6,7,8-tetrahydrofolate + H(+). Its function is as follows. Attaches a formyl group to the free amino group of methionyl-tRNA(fMet). The formyl group appears to play a dual role in the initiator identity of N-formylmethionyl-tRNA by promoting its recognition by IF2 and preventing the misappropriation of this tRNA by the elongation apparatus. This is Methionyl-tRNA formyltransferase from Enterococcus faecalis (strain ATCC 700802 / V583).